A 293-amino-acid chain; its full sequence is MSPRAIVLKEPNGVNLVPHEGIFDISPVAGWKPLLPTDQVFGIFVVFIVLLTLFLVYWIKLRKADPLRNHSSFVLLMQMLFVWAQDTTADLIGEENKKFTPYFLMLLLYLVSSNLIGLLGGISPPTSSLTFTFSLGLATFLGIVIMGIRYQRWSFFKSFTFNITIKGKKYSTLIPNPLSFLGEFAPLFSISLRLWGNILGGTLILALFYNFWFFAFSTLSNKPLALSLGAIFAGILTPALHVYFDVVVGTLQGYVFVMLTYNYWAKMRNIGLEESQEAAQRLQNLEVAKEIIN.

Helical transmembrane passes span 39-59 (QVFG…VYWI), 73-93 (FVLL…DLIG), 102-122 (YFLM…LGGI), 128-148 (SLTF…IMGI), 172-192 (TLIP…SISL), 198-218 (ILGG…AFST), 224-244 (LALS…HVYF), and 245-265 (DVVV…NYWA).

Belongs to the ATPase A chain family. In terms of assembly, F-type ATPases have 2 components, CF(1) - the catalytic core - and CF(0) - the membrane proton channel. CF(1) has five subunits: alpha(3), beta(3), gamma(1), delta(1), epsilon(1). CF(0) has three main subunits: a(1), b(2) and c(9-12). The alpha and beta chains form an alternating ring which encloses part of the gamma chain. CF(1) is attached to CF(0) by a central stalk formed by the gamma and epsilon chains, while a peripheral stalk is formed by the delta and b chains.

It is found in the cell membrane. In terms of biological role, key component of the proton channel; it plays a direct role in the translocation of protons across the membrane. The chain is ATP synthase subunit a from Mycoplasma pneumoniae (strain ATCC 29342 / M129 / Subtype 1) (Mycoplasmoides pneumoniae).